Here is a 946-residue protein sequence, read N- to C-terminus: Bifunctional lysine-specific demethylase and histidyl-hydroxylase NO66 (946 aa).

Residues Tyr-14–Val-435 are disordered. Composition is skewed to polar residues over residues Ser-17 to Thr-28 and Ala-37 to Ser-46. Over residues Ser-59 to Ser-73 the composition is skewed to low complexity. Over residues Thr-99–Glu-110 the composition is skewed to polar residues. The segment covering Glu-117 to Gly-128 has biased composition (basic and acidic residues). Over residues Thr-169–Arg-186 the composition is skewed to polar residues. Basic and acidic residues predominate over residues Glu-187–Gly-198. The span at Thr-239 to Arg-256 shows a compositional bias: polar residues. The span at Glu-257–Gly-268 shows a compositional bias: basic and acidic residues. Thr-309 carries the post-translational modification Phosphothreonine. The segment covering Thr-309–Glu-327 has biased composition (polar residues). Basic and acidic residues predominate over residues Ser-328–Gly-338. A Phosphoserine modification is found at Ser-339. Positions Thr-379–Glu-397 are enriched in polar residues. Basic and acidic residues predominate over residues Ser-398–Gly-408. Residues Arg-416–Asn-433 are compositionally biased toward polar residues. Residues Asn-606–Val-742 enclose the JmjC domain. Fe cation-binding residues include His-646, Asp-648, and His-708.

This sequence belongs to the ROX family. NO66 subfamily. The cofactor is Fe(2+).

It is found in the nucleus. It catalyses the reaction N(6),N(6)-dimethyl-L-lysyl(36)-[histone H3] + 2 2-oxoglutarate + 2 O2 = L-lysyl(36)-[histone H3] + 2 formaldehyde + 2 succinate + 2 CO2. Oxygenase that can act as both a histone lysine demethylase and a ribosomal histidine hydroxylase. Specifically demethylates 'Lys-4' (H3K4me) and 'Lys-36' (H3K36me) of histone H3, thereby playing a central role in histone code. In Drosophila pseudoobscura pseudoobscura (Fruit fly), this protein is Bifunctional lysine-specific demethylase and histidyl-hydroxylase NO66.